The chain runs to 402 residues: Envelope glycoprotein D (402 aa).

Positions 1-17 are cleaved as a signal peptide; it reads MLLAALLAALVARTTLG. Intrachain disulfides connect cysteine 66–cysteine 189, cysteine 105–cysteine 205, and cysteine 117–cysteine 126. Residues 238–316 form a profusion region; it reads YRKNGRTLPR…RPTPRPPRPE (79 aa). The tract at residues 252–350 is disordered; sequence ATPYAIDPAR…PRTPAAPGVS (99 aa). Positions 269–278 are enriched in basic residues; sequence PRPRPRPRPR. Over residues 282–292 the composition is skewed to pro residues; that stretch reads EPAPATPAPPD. Over residues 293 to 304 the composition is skewed to basic and acidic residues; that stretch reads RLPEPATRDHAA. The helical transmembrane segment at 356–376 threads the bilayer; the sequence is IVGTGTAMGALLVGVCVYIFF.

The protein belongs to the herpesviridae glycoprotein D family. Not N-glycosylated.

Its subcellular location is the virion membrane. Its function is as follows. Envelope glycoprotein that binds to the host cell entry receptor NECTIN1, promoting the virus entry into host cells. In contrast, does not use host TNFRSF14 as receptor. May trigger fusion with host membrane, by recruiting the fusion machinery composed of gB and gH/gL. This chain is Envelope glycoprotein D, found in Suid herpesvirus 1 (strain Rice) (SuHV-1).